Consider the following 1201-residue polypeptide: Kinesin-like protein costa (1201 aa).

The 388-residue stretch at 4-391 (PIQVAVRIFP…LQFAFKVQCV (388 aa)) folds into the Kinesin motor domain. Residues 23–92 (SFGPTEPKKD…NGNDSGQKDY (70 aa)) are disordered. A compositionally biased stretch (basic and acidic residues) spans 28 to 56 (EPKKDAQAVDEGADSKDSEAQVPAAEKDN). The segment covering 57-75 (PSISETDPNGNAEQDSAAD) has biased composition (polar residues). 175–182 (GQRGQGKS) is a binding site for ATP. Disordered stretches follow at residues 502–536 (AEEP…PDLD), 565–606 (HPKA…GASL), and 618–639 (ASQQ…ESSS). The span at 510 to 521 (SEAANSESPNSD) shows a compositional bias: low complexity. 2 positions are modified to phosphoserine: Ser599 and Ser605. Coiled coils occupy residues 652–821 (AATA…ELVK) and 968–1001 (TKVI…ERVL).

It belongs to the TRAFAC class myosin-kinesin ATPase superfamily. Kinesin family. KIF27 subfamily. As to quaternary structure, homodimer (Potential). Binds microtubules. Interacts with ci, smo, sgg, CkIalpha and protein kinase A catalytic subunit. Interacts (via kinesin motor domain) with Ubr3. Post-translationally, polyubiquitinated by Ubr3, which leads to proteasomal degradation.

The protein resides in the cytoplasm. It localises to the cytoskeleton. Regulates cubitus interruptus (ci) processing by recruiting multiple kinases to promote its efficient phosphorylation. Scaffolds multiple kinases and ci into proximity to promote its hyperphosphorylation, which then targets it for SCFSlimb/proteasome-mediated processing to generate its repressor form. Hh signaling inhibits ci phosphorylation by interfering with the cos-ci-kinases complex formation. Negatively regulates hh-signaling pathways during various processes, including photoreceptor differentiation. May negatively regulate a hh-signaling pathway which functions in the intestinal immune response to bacterial uracil by activating the Duox-dependent production of reactive oxygen species (ROS). The protein is Kinesin-like protein costa (cos) of Drosophila melanogaster (Fruit fly).